Consider the following 152-residue polypeptide: Ribosome maturation factor RimP (152 aa).

It belongs to the RimP family.

It is found in the cytoplasm. Its function is as follows. Required for maturation of 30S ribosomal subunits. The sequence is that of Ribosome maturation factor RimP from Ectopseudomonas mendocina (strain ymp) (Pseudomonas mendocina).